Reading from the N-terminus, the 138-residue chain is Ribulose bisphosphate carboxylase small subunit (138 aa).

Belongs to the RuBisCO small chain family. In terms of assembly, heterohexadecamer of 8 large and 8 small subunits.

It localises to the plastid. The protein localises to the chloroplast. In terms of biological role, ruBisCO catalyzes two reactions: the carboxylation of D-ribulose 1,5-bisphosphate, the primary event in carbon dioxide fixation, as well as the oxidative fragmentation of the pentose substrate in the photorespiration process. Both reactions occur simultaneously and in competition at the same active site. Although the small subunit is not catalytic it is essential for maximal activity. This is Ribulose bisphosphate carboxylase small subunit from Antithamnion sp. (Red alga).